The following is a 276-amino-acid chain: NADPH-dependent 7-cyano-7-deazaguanine reductase (276 aa).

83 to 85 serves as a coordination point for substrate; it reads IES. 85–86 lines the NADPH pocket; that stretch reads SK. The active-site Thioimide intermediate is the Cys-184. The active-site Proton donor is Asp-191. 223–224 is a substrate binding site; it reads HE. NADPH is bound at residue 252-253; that stretch reads RG.

The protein belongs to the GTP cyclohydrolase I family. QueF type 2 subfamily. Homodimer.

It is found in the cytoplasm. The catalysed reaction is 7-aminomethyl-7-carbaguanine + 2 NADP(+) = 7-cyano-7-deazaguanine + 2 NADPH + 3 H(+). It participates in tRNA modification; tRNA-queuosine biosynthesis. Its function is as follows. Catalyzes the NADPH-dependent reduction of 7-cyano-7-deazaguanine (preQ0) to 7-aminomethyl-7-deazaguanine (preQ1). This is NADPH-dependent 7-cyano-7-deazaguanine reductase from Pseudomonas syringae pv. syringae (strain B728a).